Reading from the N-terminus, the 361-residue chain is Phosphoserine aminotransferase (361 aa).

Position 43 (R43) interacts with L-glutamate. Residues A77 to S78, W103, T153, D173, and Q196 contribute to the pyridoxal 5'-phosphate site. K197 is subject to N6-(pyridoxal phosphate)lysine. N238–T239 is a pyridoxal 5'-phosphate binding site.

The protein belongs to the class-V pyridoxal-phosphate-dependent aminotransferase family. SerC subfamily. Homodimer. It depends on pyridoxal 5'-phosphate as a cofactor.

Its subcellular location is the cytoplasm. The enzyme catalyses O-phospho-L-serine + 2-oxoglutarate = 3-phosphooxypyruvate + L-glutamate. It catalyses the reaction 4-(phosphooxy)-L-threonine + 2-oxoglutarate = (R)-3-hydroxy-2-oxo-4-phosphooxybutanoate + L-glutamate. Its pathway is amino-acid biosynthesis; L-serine biosynthesis; L-serine from 3-phospho-D-glycerate: step 2/3. It functions in the pathway cofactor biosynthesis; pyridoxine 5'-phosphate biosynthesis; pyridoxine 5'-phosphate from D-erythrose 4-phosphate: step 3/5. In terms of biological role, catalyzes the reversible conversion of 3-phosphohydroxypyruvate to phosphoserine and of 3-hydroxy-2-oxo-4-phosphonooxybutanoate to phosphohydroxythreonine. This chain is Phosphoserine aminotransferase, found in Ectopseudomonas mendocina (strain ymp) (Pseudomonas mendocina).